The sequence spans 470 residues: Histidine--tRNA ligase (470 aa).

Residues 69 to 99 are disordered; sequence GIDPILPPNRQAEKDKSGETGKDKSGETGSE. The segment covering 79-94 has biased composition (basic and acidic residues); that stretch reads QAEKDKSGETGKDKSG.

Belongs to the class-II aminoacyl-tRNA synthetase family. Homodimer.

The protein localises to the cytoplasm. The catalysed reaction is tRNA(His) + L-histidine + ATP = L-histidyl-tRNA(His) + AMP + diphosphate + H(+). The sequence is that of Histidine--tRNA ligase from Nostoc punctiforme (strain ATCC 29133 / PCC 73102).